A 166-amino-acid chain; its full sequence is Crossover junction endodeoxyribonuclease RuvC (166 aa).

Catalysis depends on residues Asp-7, Glu-70, and His-143. The Mg(2+) site is built by Asp-7, Glu-70, and His-143.

This sequence belongs to the RuvC family. In terms of assembly, homodimer which binds Holliday junction (HJ) DNA. The HJ becomes 2-fold symmetrical on binding to RuvC with unstacked arms; it has a different conformation from HJ DNA in complex with RuvA. In the full resolvosome a probable DNA-RuvA(4)-RuvB(12)-RuvC(2) complex forms which resolves the HJ. It depends on Mg(2+) as a cofactor.

It localises to the cytoplasm. The enzyme catalyses Endonucleolytic cleavage at a junction such as a reciprocal single-stranded crossover between two homologous DNA duplexes (Holliday junction).. Functionally, the RuvA-RuvB-RuvC complex processes Holliday junction (HJ) DNA during genetic recombination and DNA repair. Endonuclease that resolves HJ intermediates. Cleaves cruciform DNA by making single-stranded nicks across the HJ at symmetrical positions within the homologous arms, yielding a 5'-phosphate and a 3'-hydroxyl group; requires a central core of homology in the junction. The consensus cleavage sequence is 5'-(A/T)TT(C/G)-3'. Cleavage occurs on the 3'-side of the TT dinucleotide at the point of strand exchange. HJ branch migration catalyzed by RuvA-RuvB allows RuvC to scan DNA until it finds its consensus sequence, where it cleaves and resolves the cruciform DNA. The sequence is that of Crossover junction endodeoxyribonuclease RuvC from Thermus thermophilus (strain ATCC BAA-163 / DSM 7039 / HB27).